Consider the following 258-residue polypeptide: 3-deoxy-manno-octulosonate cytidylyltransferase (258 aa).

This sequence belongs to the KdsB family.

Its subcellular location is the cytoplasm. The enzyme catalyses 3-deoxy-alpha-D-manno-oct-2-ulosonate + CTP = CMP-3-deoxy-beta-D-manno-octulosonate + diphosphate. Its pathway is nucleotide-sugar biosynthesis; CMP-3-deoxy-D-manno-octulosonate biosynthesis; CMP-3-deoxy-D-manno-octulosonate from 3-deoxy-D-manno-octulosonate and CTP: step 1/1. The protein operates within bacterial outer membrane biogenesis; lipopolysaccharide biosynthesis. In terms of biological role, activates KDO (a required 8-carbon sugar) for incorporation into bacterial lipopolysaccharide in Gram-negative bacteria. This Parvibaculum lavamentivorans (strain DS-1 / DSM 13023 / NCIMB 13966) protein is 3-deoxy-manno-octulosonate cytidylyltransferase.